The following is a 443-amino-acid chain: Eukaryotic translation initiation factor 3 subunit E (443 aa).

Residues 249-417 (LDLFFNAGFI…GTVVMNHPPS (169 aa)) enclose the PCI domain.

This sequence belongs to the eIF-3 subunit E family. As to quaternary structure, component of the eukaryotic translation initiation factor 3 (eIF-3) complex.

It localises to the cytoplasm. Component of the eukaryotic translation initiation factor 3 (eIF-3) complex, which is involved in protein synthesis of a specialized repertoire of mRNAs and, together with other initiation factors, stimulates binding of mRNA and methionyl-tRNAi to the 40S ribosome. The eIF-3 complex specifically targets and initiates translation of a subset of mRNAs involved in cell proliferation. This chain is Eukaryotic translation initiation factor 3 subunit E (int-6), found in Neurospora crassa (strain ATCC 24698 / 74-OR23-1A / CBS 708.71 / DSM 1257 / FGSC 987).